The chain runs to 372 residues: N-methyl-L-tryptophan oxidase (372 aa).

Residue 4 to 34 (DLIIIGSGSVGAAAGYYATRAGLKVLMTDAH) participates in FAD binding. Position 307 is an S-8alpha-FAD cysteine (cysteine 307).

The protein belongs to the MSOX/MTOX family. MTOX subfamily. Monomer. The cofactor is FAD.

It carries out the reaction N(alpha)-methyl-L-tryptophan + O2 + H2O = L-tryptophan + formaldehyde + H2O2. Functionally, catalyzes the oxidative demethylation of N-methyl-L-tryptophan. The polypeptide is N-methyl-L-tryptophan oxidase (Salmonella heidelberg (strain SL476)).